The sequence spans 298 residues: DDRGK domain-containing protein 1 (298 aa).

A helical transmembrane segment spans residues 1 to 21; the sequence is MDIVLYFVAVPILIVLIVSAV. The Cytoplasmic portion of the chain corresponds to 22–298; it reads KVRGKTEEDN…NLIPEIHNTA (277 aa). The segment at 71–149 is disordered; it reads NSAYREAADN…EERRKEDKKE (79 aa). A compositionally biased stretch (acidic residues) spans 82 to 94; that stretch reads SPVEVEEEYEEAE. A compositionally biased stretch (basic and acidic residues) spans 110–149; it reads KLEEKQAKRAQREAELEEREERKRTQELREEERRKEDKKE. A UFM1-interacting motif (UFIM) motif is present at residues 181–195; that stretch reads SFVVEEQGEADELTE. Residues 215–259 form the PCI domain; the sequence is VLLEDLASHFGLRTQDAISRLQDLLSDGSITGVIDDRGKFIFITP.

This sequence belongs to the DDRGK1 family. As to quaternary structure, component of the UFM1 ribosome E3 ligase (UREL) complex, composed of ufl1, ddrgk1 and cdk5rap3.

Its subcellular location is the endoplasmic reticulum membrane. In terms of biological role, component of the UFM1 ribosome E3 ligase (UREL) complex, a multiprotein complex that catalyzes ufmylation of endoplasmic reticulum-docked proteins. The UREL complex plays a key role in ribosome recycling by mediating mono-ufmylation of the RPL26/uL24 subunit of the 60S ribosome following ribosome dissociation: ufmylation weakens the junction between post-termination 60S subunits and SEC61 translocons, promoting release and recycling of the large ribosomal subunit from the endoplasmic reticulum membrane. Ufmylation of RPL26/uL24 and subsequent 60S ribosome recycling either take place after normal termination of translation or after ribosome stalling during cotranslational translocation at the endoplasmic reticulum. Within the UREL complex, DDRGK1 tethers the complex to the endoplasmic reticulum membrane to restrict its activity to endoplasmic reticulum-docked ribosomes and acts as an ufmylation 'reader': following RPL26/uL24 ufmylation, DDRGK1 specifically binds to ufmylated RPL26/uL24 via its UFIM motif, resulting in stable association between the 60S ribosome and the UREL complex, followed by dissociation of the 60S ribosome subunit from the endoplasmic reticulum membrane. The UREL complex is also involved in reticulophagy in response to endoplasmic reticulum stress by promoting ufmylation of proteins such as CYB5R3 and RPN1, thereby promoting lysosomal degradation of ufmylated proteins. Required for stabilization and ufmylation of ATG9A. The chain is DDRGK domain-containing protein 1 from Osmerus mordax (Rainbow smelt).